The primary structure comprises 134 residues: Small ribosomal subunit protein uS11 (134 aa).

Disordered stretches follow at residues Met-1 to Ala-22 and Ser-114 to Val-134. Positions Ala-9–Ala-22 are enriched in basic residues.

The protein belongs to the universal ribosomal protein uS11 family. In terms of assembly, part of the 30S ribosomal subunit. Interacts with proteins S7 and S18. Binds to IF-3.

In terms of biological role, located on the platform of the 30S subunit, it bridges several disparate RNA helices of the 16S rRNA. Forms part of the Shine-Dalgarno cleft in the 70S ribosome. This is Small ribosomal subunit protein uS11 from Streptomyces coelicolor (strain ATCC BAA-471 / A3(2) / M145).